The sequence spans 1457 residues: ABC transporter G family member 36 (1457 aa).

The disordered stretch occupies residues 14 to 43; it reads RLGGSMRGDSGSMWRRGDDVFSRSSREEDD. The span at 28 to 39 shows a compositional bias: basic and acidic residues; sequence RRGDDVFSRSSR. In terms of domain architecture, ABC transporter 1 spans 164–437; sequence GNALGILPNR…FESMGFKCPD (274 aa). 197–204 contacts ATP; that stretch reads GPPGSGKT. An ABC transmembrane type-2 1 domain is found at 515 to 728; the sequence is ELLKANIDRE…AQNAISVNEL (214 aa). Transmembrane regions (helical) follow at residues 533-553, 565-585, 621-641, 653-673, 677-697, 706-726, and 765-785; these read FVYM…MTLF, SGGI…FNGF, IPIT…VIGF, LLML…GGAA, IVAN…GGFI, WWIW…ISVN, and IGFG…TLAL. Positions 821–841 are disordered; the sequence is SSGSTRRPMGNGTENDSTIVD. The 253-residue stretch at 860 to 1112 folds into the ABC transporter 2 domain; it reads LSFDNVRYSV…ELIKYFESIP (253 aa). 905-912 is an ATP binding site; it reads GVSGAGKT. One can recognise an ABC transmembrane type-2 2 domain in the interval 1185–1399; it reads TQCMACLWKQ…TLYGLVVSQF (215 aa). Transmembrane regions (helical) follow at residues 1209-1229, 1244-1264, 1292-1312, 1319-1339, 1349-1369, 1380-1400, and 1429-1449; these read FFFT…LGGK, YAAV…VVAV, IPYT…MIGF, FFWY…YGMM, IASI…GFVI, WYCW…SQFG, and WVAT…GFAI.

Belongs to the ABC transporter superfamily. ABCG family. PDR (TC 3.A.1.205) subfamily.

The protein resides in the membrane. Its function is as follows. May be a general defense protein. The polypeptide is ABC transporter G family member 36 (Oryza sativa subsp. japonica (Rice)).